The sequence spans 428 residues: Neuromedin-U receptor 1 (428 aa).

Topologically, residues 1 to 59 (MTPPCLNCSIFPGALSPNASRSPLVCNISEFKWPYQPEDLNLTDEALRLKYLGPQQMKQ) are extracellular. N-linked (GlcNAc...) asparagine glycosylation is found at Asn-27 and Asn-41. The chain crosses the membrane as a helical span at residues 60–80 (FVPICVTYLLIFVVGTLGNGL). Over 81-96 (TCTVILRNKTMRTPTN) the chain is Cytoplasmic. A helical membrane pass occupies residues 97-117 (FYLFSLAVSDMLVLLVGLPLE). The Extracellular segment spans residues 118 to 137 (LYEMQQNYPFQLGASACYFR). A disulfide bond links Cys-134 and Cys-219. A helical membrane pass occupies residues 138–158 (ILLLETVCLASVLNVTALSVE). At 159 to 181 (RYVAVVRPLQAKSVMTRAHVRRM) the chain is on the cytoplasmic side. A helical transmembrane segment spans residues 182–202 (VGAIWVLATLFSLPNTSLHGL). Over 203–235 (SQLTVPCRGPVPDSAICSLVGPMDFYKLVVLTT) the chain is Extracellular. The chain crosses the membrane as a helical span at residues 236–256 (ALLFFCLPMVTISVLYLLIGL). Over 257–294 (RLRRERMLLQVEVKGRKTAATQETSHRRIQLQDRGRRQ) the chain is Cytoplasmic. Residues 295 to 315 (VTKMLFALVVVFGICWAPFHA) form a helical membrane-spanning segment. The Extracellular portion of the chain corresponds to 316–339 (DRIMWSLVYGHSTEGLHLAYQCVH). A helical transmembrane segment spans residues 340-360 (IASGIFFYLGSAANPVLYSLM). Residues 361-428 (STRFRETFLQ…PGCQQETDPS (68 aa)) lie on the Cytoplasmic side of the membrane.

Belongs to the G-protein coupled receptor 1 family. In terms of tissue distribution, ubiquitously expressed.

The protein localises to the cell membrane. In terms of biological role, receptor for the neuromedin-U and neuromedin-S neuropeptides. The polypeptide is Neuromedin-U receptor 1 (Nmur1) (Mus musculus (Mouse)).